The following is a 257-amino-acid chain: MELAERFLLDALAYLECALGVVCYVLLKLVGSPYGRYASSGSAFGLPARAAWTVQELPSLALPLLACAGAGAPAERLNRWPNCILLAMFLVHYAQRSLVFPFLIRGGKPMPLYAFLLAFIFCTYNGYLQSRYLSQYAVYADDWLSDPRFLTGSALWLIGMLINIHSDHVLRNLRKPGETGYKIPRGGLFEYISAANYFGEVVEWCGYALASWSIQGWAFAVFTFCVLFTRAQQHHKWYHEKFEDYPKFRKIMIPFLV.

6 helical membrane passes run 7-27, 50-70, 84-104, 109-129, 149-169, and 208-228; these read FLLD…YVLL, AAWT…CAGA, ILLA…PFLI, PMPL…GYLQ, FLTG…SDHV, and ALAS…CVLF.

It belongs to the steroid 5-alpha reductase family.

Its subcellular location is the microsome membrane. The protein resides in the endoplasmic reticulum membrane. It catalyses the reaction a 3-oxo-5alpha-steroid + NADP(+) = a 3-oxo-Delta(4)-steroid + NADPH + H(+). The catalysed reaction is 5alpha-pregnane-3,20-dione + NADP(+) = progesterone + NADPH + H(+). It carries out the reaction 17beta-hydroxy-5alpha-androstan-3-one + NADP(+) = testosterone + NADPH + H(+). The enzyme catalyses androst-4-ene-3,17-dione + NADPH + H(+) = 5alpha-androstan-3,17-dione + NADP(+). Converts testosterone into 5-alpha-dihydrotestosterone and progesterone or corticosterone into their corresponding 5-alpha-3-oxosteroids. It plays a central role in sexual differentiation and androgen physiology. This Bos taurus (Bovine) protein is 3-oxo-5-alpha-steroid 4-dehydrogenase 1 (SRD5A1).